Here is a 294-residue protein sequence, read N- to C-terminus: Protease HtpX homolog 2 (294 aa).

The next 2 membrane-spanning stretches (helical) occupy residues 15–35 and 36–56; these read MLFTMFLLAAVYLFFLAFLSY and YGTSQIFIILFIGLFMAAQYF. Histidine 140 is a Zn(2+) binding site. Residue glutamate 141 is part of the active site. A Zn(2+)-binding site is contributed by histidine 144. A run of 2 helical transmembrane segments spans residues 151-171 and 185-205; these read AVLTIASFLSSVAFYIVRYSL and GGIMLVWLVSIVVWIVSFLLI. Glutamate 213 is a Zn(2+) binding site.

Belongs to the peptidase M48B family. Zn(2+) is required as a cofactor.

The protein resides in the cell membrane. The sequence is that of Protease HtpX homolog 2 from Methanosarcina mazei (strain ATCC BAA-159 / DSM 3647 / Goe1 / Go1 / JCM 11833 / OCM 88) (Methanosarcina frisia).